The following is a 108-amino-acid chain: uncharacterized protein (108 aa).

A run of 3 helical transmembrane segments spans residues 24–44 (LWIT…GGLL), 55–75 (AHMA…YLAM), and 88–108 (RFEI…SIGI).

It to cation A.eutrophus efflux system protein CzcD.

The protein resides in the cell membrane. This is an uncharacterized protein from Geobacillus stearothermophilus (Bacillus stearothermophilus).